The following is a 376-amino-acid chain: MLTAVCGSLGSQHTDAPHASPPRLDLQPLQTYQGHTSPEAGDYPSPLQPGELQSLPLGPEVDFSQGYELPGASSRVTCEDLESDSPLAPGPFSKLLQPDMSHHYESWFRPTHPGTEDGSWWDLHPGTSWMDLPHTQGALTSPGHPGALQPALGGYVGDHQLCAPPPHPHPHHLLPAAGGQHLLGPPDGAKALEAAAQESQGLDSSLDAASRPKGSRRSVPRSSGQTVCRCPNCLEAERLGAPCGPDGGKKKHLHNCHIPGCGKAYAKTSHLKAHLRWHSGDRPFVCNWLFCGKRFTRSDELQRHLQTHTGTKKFPCAVCSRVFMRSDHLAKHMKTHEGAKEEAAAAAQGEGKAGGVVEPPGGKGKREAEGSSASSN.

The interval 1-70 (MLTAVCGSLG…VDFSQGYELP (70 aa)) is disordered. A 9aaTAD motif is present at residues 118–126 (GSWWDLHPG). Residues 164-224 (PPPHPHPHHL…SRRSVPRSSG (61 aa)) are disordered. 3 C2H2-type zinc fingers span residues 254 to 278 (HNCH…LRWH), 284 to 308 (FVCN…LQTH), and 314 to 336 (FPCA…MKTH). Basic and acidic residues predominate over residues 334–343 (KTHEGAKEEA). The segment at 334–376 (KTHEGAKEEAAAAAQGEGKAGGVVEPPGGKGKREAEGSSASSN) is disordered. Over residues 344 to 360 (AAAAQGEGKAGGVVEPP) the composition is skewed to low complexity.

It belongs to the Sp1 C2H2-type zinc-finger protein family. As to expression, ubiquitous. Preferentially expressed by proliferating epithelial cells of teeth, hair follicles and limbs.

The protein localises to the nucleus. In terms of biological role, promotes cell proliferation. Plays a role in tooth germ growth. Plays a role in the control of enamel mineralization. Binds the AMBN promoter. This Mus musculus (Mouse) protein is Transcription factor Sp6 (Sp6).